Reading from the N-terminus, the 870-residue chain is DNA mismatch repair protein MutS (870 aa).

Gly-616–Ser-623 contributes to the ATP binding site.

Belongs to the DNA mismatch repair MutS family.

In terms of biological role, this protein is involved in the repair of mismatches in DNA. It is possible that it carries out the mismatch recognition step. This protein has a weak ATPase activity. This chain is DNA mismatch repair protein MutS, found in Parabacteroides distasonis (strain ATCC 8503 / DSM 20701 / CIP 104284 / JCM 5825 / NCTC 11152).